Here is a 316-residue protein sequence, read N- to C-terminus: Pseudouridine-5'-phosphate glycosidase (316 aa).

The Proton donor role is filled by Glu-31. The substrate site is built by Lys-92 and Val-112. Residue Asp-144 participates in Mn(2+) binding. Position 146 to 148 (146 to 148 (SAD)) interacts with substrate. Residue Lys-165 is the Nucleophile of the active site.

This sequence belongs to the pseudouridine-5'-phosphate glycosidase family. In terms of assembly, homotrimer. The cofactor is Mn(2+).

It catalyses the reaction D-ribose 5-phosphate + uracil = psi-UMP + H2O. In terms of biological role, catalyzes the reversible cleavage of pseudouridine 5'-phosphate (PsiMP) to ribose 5-phosphate and uracil. Functions biologically in the cleavage direction, as part of a pseudouridine degradation pathway. Part of an operon that could be involved in the biosynthesis of the blue pigment indigoidine, which is implicated in pathogenicity and protection from oxidative stress. The polypeptide is Pseudouridine-5'-phosphate glycosidase (Dickeya dadantii (strain 3937) (Erwinia chrysanthemi (strain 3937))).